A 299-amino-acid chain; its full sequence is tRNA dimethylallyltransferase (299 aa).

Position 22–29 (22–29 (GPTASGKT)) interacts with ATP. 24–29 (TASGKT) is a substrate binding site. Interaction with substrate tRNA regions lie at residues 47-50 (DSRQ) and 172-176 (QRLLR).

The protein belongs to the IPP transferase family. In terms of assembly, monomer. Mg(2+) serves as cofactor.

The enzyme catalyses adenosine(37) in tRNA + dimethylallyl diphosphate = N(6)-dimethylallyladenosine(37) in tRNA + diphosphate. Catalyzes the transfer of a dimethylallyl group onto the adenine at position 37 in tRNAs that read codons beginning with uridine, leading to the formation of N6-(dimethylallyl)adenosine (i(6)A). This Endomicrobium trichonymphae protein is tRNA dimethylallyltransferase.